The chain runs to 434 residues: Protein HEAT INTOLERANT 4 (434 aa).

The Nuclear localization signal 1 signature appears at 1–8 (MKKGAKRK). The span at 1 to 15 (MKKGAKRKGVSKAGR) shows a compositional bias: basic residues. The disordered stretch occupies residues 1–131 (MKKGAKRKGV…PVPKAKKPRA (131 aa)). The span at 30–53 (ETTKTTQEESQQHEEEVVDEVKEN) shows a compositional bias: basic and acidic residues. Residues 54-82 (GEEEEAKGDQEEEEDAKPDSLEEDEENQE) are compositionally biased toward acidic residues. Basic and acidic residues predominate over residues 83 to 98 (DEVKAEEVKEEVEKKP). A Nuclear localization signal 2 motif is present at residues 95 to 102 (EKKPVARR). The span at 99–110 (VARRGGKRKRAT) shows a compositional bias: basic residues. A compositionally biased stretch (basic and acidic residues) spans 111-122 (KKDTEIKDEKKP). A coiled-coil region spans residues 363–394 (VKEQVRAAKKANREAKDARKKAIEEMSEDTKQ). The Nuclear localization signal 3 signature appears at 370–377 (AKKANREA).

Its subcellular location is the nucleus. It is found in the nucleolus. Its function is as follows. Essential protein required for basal thermotolerance, especially during heat-induced chromocentre decondensation, thus regulating transcriptional gene silencing (TGS). This chain is Protein HEAT INTOLERANT 4, found in Arabidopsis thaliana (Mouse-ear cress).